The chain runs to 474 residues: Methylenetetrahydrofolate--tRNA-(uracil-5-)-methyltransferase TrmFO (474 aa).

13-18 provides a ligand contact to FAD; sequence GGGLAG.

Belongs to the MnmG family. TrmFO subfamily. FAD is required as a cofactor.

The protein localises to the cytoplasm. It catalyses the reaction uridine(54) in tRNA + (6R)-5,10-methylene-5,6,7,8-tetrahydrofolate + NADH + H(+) = 5-methyluridine(54) in tRNA + (6S)-5,6,7,8-tetrahydrofolate + NAD(+). The enzyme catalyses uridine(54) in tRNA + (6R)-5,10-methylene-5,6,7,8-tetrahydrofolate + NADPH + H(+) = 5-methyluridine(54) in tRNA + (6S)-5,6,7,8-tetrahydrofolate + NADP(+). In terms of biological role, catalyzes the folate-dependent formation of 5-methyl-uridine at position 54 (M-5-U54) in all tRNAs. The sequence is that of Methylenetetrahydrofolate--tRNA-(uracil-5-)-methyltransferase TrmFO from Bartonella tribocorum (strain CIP 105476 / IBS 506).